A 568-amino-acid polypeptide reads, in one-letter code: Natural resistance-associated macrophage protein 2 (568 aa).

Over residues 1-20 (MVLDPKEKMPDDGASGDHGD) the composition is skewed to basic and acidic residues. Positions 1 to 45 (MVLDPKEKMPDDGASGDHGDSASLGAINPAYSNSSLPHSTGDSEE) are disordered. Topologically, residues 1–69 (MVLDPKEKMP…EEYSCFSFRK (69 aa)) are cytoplasmic. Residues 30–40 (AYSNSSLPHST) show a composition bias toward polar residues. Residues 70-90 (LWAFTGPGFLMSIAYLDPGNI) form a helical membrane-spanning segment. At 91–95 (ESDLQ) the chain is on the extracellular side. The helical transmembrane segment at 96 to 117 (SGAVAGFKLLWVLLLATIVGLL) threads the bilayer. At 118 to 154 (LQRLAARLGVVTGLHLAEVCHRQYPKVPRIILWLMVE) the chain is on the cytoplasmic side. Residues 155–175 (LAIIGSDMQEVIGSAIAINLL) form a helical membrane-spanning segment. Over 176 to 179 (SAGR) the chain is Extracellular. The chain crosses the membrane as a helical span at residues 180-194 (VPLWGGVLITIADTF). The Cytoplasmic portion of the chain corresponds to 195–208 (VFLFLDKYGLRKLE). Residues 209–229 (AFFGFLITIMALTFGYEYITV) form a helical membrane-spanning segment. Over 230–255 (KPSQSQVLRGMFVPSCPGCRTPQVEQ) the chain is Extracellular. Residues 256-276 (AVGIVGAVIMPHNMYLHSALV) traverse the membrane as a helical segment. Residues 277–301 (KSRQVNRANKQEVREANKYFFIESC) lie on the Cytoplasmic side of the membrane. A helical transmembrane segment spans residues 302–322 (IALFVSFIINVFVVSVFAEAF). Over 323–360 (FEKTNKQVVEVCKNNSSPHADLFPSDNSTLAVDIYKGG) the chain is Extracellular. N-linked (GlcNAc...) asparagine glycans are attached at residues asparagine 336 and asparagine 349. The chain crosses the membrane as a helical span at residues 361–381 (VVLGCYFGPAALYIWAVGILA). Residues 382 to 408 (AGQSSTMTGTYSGQFVMEGFLNLKWSR) are Cytoplasmic-facing. A helical membrane pass occupies residues 409–429 (FARVILTRSIAIIPTLLVAVF). Residues 430–440 (QDVEHLTGMND) lie on the Extracellular side of the membrane. A helical transmembrane segment spans residues 441-461 (FLNVLQSLQLPFALIPILTFT). Residues 462–482 (SLRPVMSEFSNGIGWRIAGGI) are Cytoplasmic-facing. Residues 483 to 503 (LVLIVCSINMYFVVVYVQELG) form a helical membrane-spanning segment. Residues 504–506 (HVA) lie on the Extracellular side of the membrane. A helical membrane pass occupies residues 507-527 (LYVVAAVVSVAYLTFVFYLGW). At 528–568 (QCLIALGLSFLDCGRSYRLGLTAQPELYLLNTVDADSVVSR) the chain is on the cytoplasmic side. Residues 555–559 (YLLNT) are required for early endosome targeting. A phosphoserine mark is found at leucine 556, serine 564, and serine 567.

Belongs to the NRAMP family. Forms a complex with NDFIP1 and NEDD4L, in cortical neurons, in response to iron and cobalt exposure; this interaction leads to SLC11A2 ubiquitination by NEDD4L and proteasome-dependent degradation. Interacts with NDFIP1, NDFIP2 and WWP2; this interaction leads to SLC11A2 ubiquitination by WWP2 and subsequent proteasome-dependent degradation. Interacts with COX2 and TOM6 at the outer mitochondrion membrane. Interacts with ARRDC1; this interaction regulates the incorporation of SLC11A2 into extracellular vesicles through an ubiquitination-dependent mechanism. Interacts with ARRDC4; controls the incorporation of SLC11A2 into extracellular vesicles through an ubiquitination-dependent mechanism. In terms of processing, ubiquitinated by WWP2. N-glycosylated. Abundantly expressed in erythroid precursor cells (at protein level). In terms of tissue distribution, expressed in duodenum (at protein level).

The protein resides in the golgi apparatus. The protein localises to the trans-Golgi network membrane. It is found in the early endosome membrane. Its subcellular location is the recycling endosome membrane. It localises to the cell membrane. The protein resides in the late endosome membrane. The protein localises to the lysosome membrane. It is found in the apical cell membrane. Its subcellular location is the mitochondrion outer membrane. It localises to the extracellular vesicle membrane. The enzyme catalyses Fe(2+)(in) + H(+)(in) = Fe(2+)(out) + H(+)(out). It catalyses the reaction Co(2+)(out) + H(+)(out) = Co(2+)(in) + H(+)(in). It carries out the reaction Cd(2+)(out) + H(+)(out) = Cd(2+)(in) + H(+)(in). The catalysed reaction is Mn(2+)(in) + H(+)(in) = Mn(2+)(out) + H(+)(out). The enzyme catalyses Zn(2+)(out) + H(+)(out) = Zn(2+)(in) + H(+)(in). It catalyses the reaction Ni(2+)(out) + H(+)(out) = Ni(2+)(in) + H(+)(in). It carries out the reaction H(+)(in) = H(+)(out). The catalysed reaction is Fe(2+)(in) = Fe(2+)(out). Functionally, proton-coupled metal ion symporter operating with a proton to metal ion stoichiometry of 1:1. Selectively transports various divalent metal cations, in decreasing affinity: Cd(2+) &gt; Fe(2+) &gt; Co(2+), Mn(2+) &gt;&gt; Zn(2+), Ni(2+), VO(2+). Essential for maintenance of iron homeostasis by modulating intestinal absorption of dietary Fe(2+) and TF-associated endosomal Fe(2+) transport in erythroid precursors and other cells. Enables Fe(2+) and Mn(2+) ion entry into mitochondria, and is thus expected to promote mitochondrial heme synthesis, iron-sulfur cluster biogenesis and antioxidant defense. Can mediate uncoupled fluxes of either protons or metal ions. This is Natural resistance-associated macrophage protein 2 (Slc11a2) from Mus musculus (Mouse).